Here is a 446-residue protein sequence, read N- to C-terminus: Exodeoxyribonuclease 7 large subunit (446 aa).

The protein belongs to the XseA family. In terms of assembly, heterooligomer composed of large and small subunits.

The protein localises to the cytoplasm. The catalysed reaction is Exonucleolytic cleavage in either 5'- to 3'- or 3'- to 5'-direction to yield nucleoside 5'-phosphates.. Bidirectionally degrades single-stranded DNA into large acid-insoluble oligonucleotides, which are then degraded further into small acid-soluble oligonucleotides. The sequence is that of Exodeoxyribonuclease 7 large subunit from Streptococcus thermophilus (strain CNRZ 1066).